Reading from the N-terminus, the 624-residue chain is MTQAEKGDAENGKEKGGEKEKEQRGVKRPIVPALVPESLQEQIQSNFIVVIHPGSTTLRLGRATDTLPVSVPHVIARRHKQQGQPLYKDNWLLREGLNKPESNEQRQNGLKMVDQAIWSKKMSNGTRRIPVSPEQTRSYNKQMRPAILDHCSGNKWTNTSQQPEYLVGEEALYVNPLDCYNIHWPIRRGQLNIHPGPGGSLTAVLADIEVIWSHAIQKYLEIPLKDLKYYRCILLIPDIYNKQHVKELVHMILMKMGFAGIVVHQESVCATFGSGLSSTCVVDVGDQKTSVCCVEDGVSHRNTRLCLAYGGSDVSRCFYWLMQRAGFPYRECQLTNKMDCLLLQHLKETFCHLDQDISGLQDHEFQIRHPDSPALLYQFRLGDEKLQAPMALFYPATFGIVGQKMTTLQHRSQGDPEDPHDEHYLLATQSKQEQSAKATADRKSASKPIGFEGDLRGQSSDLPERLHSQEVDLASSQGDCLMAGNESEEALTALMSRKTAISLFEGKALGLDKAILHSVDCCSSDDTKKKMYSSILVVGGGLMFHKAQEFLQHRILNKMPPSFRRIIENVDVITRPKDMDPRLIAWKGGAVLACLDTTQELWIYQREWQRFGVRMLRERAAFVW.

Met-1 carries the N-acetylmethionine modification. Residues Met-1–Gly-25 show a composition bias toward basic and acidic residues. Positions Met-1 to Pro-29 are disordered. ATP-binding residues include Ser-55 and Thr-56. Ser-132 is subject to Phosphoserine. Asp-283–Asp-286 serves as a coordination point for ATP. A Phosphoserine modification is found at Ser-412. Residues Ser-430–Leu-462 form a disordered region.

The protein belongs to the actin family. ARP8 subfamily. Component of the chromatin remodeling INO80 complex; specifically part of a complex module associated with the DBINO domain of INO80. Exists as monomers and dimers, but the dimer is most probably the biologically relevant form required for stable interactions with histones that exploits the twofold symmetry of the nucleosome core.

The protein resides in the nucleus. The protein localises to the chromosome. Functionally, plays an important role in the functional organization of mitotic chromosomes. Exhibits low basal ATPase activity, and unable to polymerize. Its function is as follows. Proposed core component of the chromatin remodeling INO80 complex which is involved in transcriptional regulation, DNA replication and probably DNA repair. Required for the recruitment of INO80 (and probably the INO80 complex) to sites of DNA damage Strongly prefer nucleosomes and H3-H4 tetramers over H2A-H2B dimers, suggesting it may act as a nucleosome recognition module within the complex. The sequence is that of Actin-related protein 8 (Actr8) from Mus musculus (Mouse).